A 594-amino-acid chain; its full sequence is MIQKLGAKGIKSDERNQREWDDGSEHDDVTKIYVRGGREGIRSIYFNYVKNGKPKDGSIHGYFDSGFTQTFEINHLRGEYLESVDAYYDKKSYGMQAIQFKTNFRTSELMGYSYECTMFTLAVQGKKIIGFHGSNYVHILSLGAYFISIAPTRLEVKGSKGSKKWDDGFDHENVSKIEVLGGFEGILYIKVDYIKNGKLETGLVHGHSGGDGFLQKMEINQSKNEYLVYVEGYYDDASETIQGLHFQTNLNNPVMMGYKKGRKFLLASNGNKIIGFHGYADKSLNSLGAYFSTTTPNKLECQGDRKGLPWDDGCNYDGVKKVYVDSISDIDSVRFEYDNGGKVEKTPYRRDVTNEKEFVLDYPNEFITSVEGTLATPTNFDITWILSLTFKTSKGRTSPTFGSSSPGRKFVLEKNGSALVGFHGYIGPGYNIKALGAYYRPIPPTPDVKRLEAQGGDGGASWDDGGTFNSVRKIYIGLGKNVVGFVKFLYYKNARVVIGDDHGNKTLSSDLLEFLLDPFEHIISVEGTYDDTSGGITMLRFETNLQKSPYFGFGTTSNFLLHKDNHQIVGFHGKSSNMLHQLGVHVIPNGFKFI.

The segment at 1-23 is disordered; it reads MIQKLGAKGIKSDERNQREWDDG. 4 Jacalin-type lectin domains span residues 2 to 148, 151 to 293, 296 to 441, and 448 to 588; these read IQKL…YFIS, PTRL…YFST, PNKL…YYRP, and VKRL…HVIP. Residues 10–23 show a composition bias toward basic and acidic residues; the sequence is IKSDERNQREWDDG.

Belongs to the jacalin lectin family.

This Arabidopsis thaliana (Mouse-ear cress) protein is Jacalin-related lectin 44 (JAL44).